Reading from the N-terminus, the 395-residue chain is E3 ubiquitin-protein ligase RNFT1 (395 aa).

2 disordered regions span residues 1 to 58 (MQAS…SSRN) and 78 to 97 (YSHS…GEHG). A run of 6 helical transmembrane segments spans residues 118 to 138 (ILIL…LGIG), 165 to 185 (CAWL…TFHS), 193 to 213 (IFLN…IVGI), 216 to 236 (FILK…PSFI), 258 to 278 (IFVP…FGNV), and 283 to 303 (LGIL…FGHL). The interval 328–379 (CSDMDGICTICQAEFQKPVLLFCQHIFCEECITLWFNREKTCPLCRTVISEC) is required for ubiquitin ligase activity and for protection against ER stress-induced cell death. An RING-type zinc finger spans residues 335–373 (CTICQAEFQKPVLLFCQHIFCEECITLWFNREKTCPLCR).

As to expression, predominantly expressed in testis.

The protein resides in the early endosome membrane. The catalysed reaction is S-ubiquitinyl-[E2 ubiquitin-conjugating enzyme]-L-cysteine + [acceptor protein]-L-lysine = [E2 ubiquitin-conjugating enzyme]-L-cysteine + N(6)-ubiquitinyl-[acceptor protein]-L-lysine.. The protein operates within protein modification; protein ubiquitination. Its function is as follows. E3 ubiquitin-protein ligase that acts in the endoplasmic reticulum (ER)-associated degradation (ERAD) pathway, which targets misfolded proteins that accumulate in the endoplasmic reticulum (ER) for ubiquitination and subsequent proteasome-mediated degradation. Protects cells from ER stress-induced apoptosis. In Mus musculus (Mouse), this protein is E3 ubiquitin-protein ligase RNFT1 (Rnft1).